Reading from the N-terminus, the 770-residue chain is Probable zinc transporter protein DDB_G0291141 (770 aa).

At 1-36 (MAGSLDDSIYNNGRSGGGGGGFKFSKGFNKDSISKR) the chain is on the cytoplasmic side. Residues 37–57 (IIMMLFFSKGIRAWSCIILLY) traverse the membrane as a helical segment. Topologically, residues 58 to 62 (FLQSS) are extracellular. A helical membrane pass occupies residues 63–83 (ISIISASFYMCLFSAIFSVVV). Over 84–100 (EKPWNLLSSLRPSQIKK) the chain is Cytoplasmic. A helical membrane pass occupies residues 101 to 117 (IIYHSIFNLLIIITWNS). The Extracellular portion of the chain corresponds to 118–123 (SIKFIG). The helical transmembrane segment at 124 to 146 (PIGSILASDYTFSTYPLIFNSLL) threads the bilayer. At 147 to 154 (QGNFLATD) the chain is on the cytoplasmic side. The helical transmembrane segment at 155-175 (MSRGSIMLMIGYFLIPLFGIS) threads the bilayer. Over 176–184 (NRLDILGYT) the chain is Extracellular. Residues 185–205 (SSQVFMIGLFSLIVHNVLVLW) traverse the membrane as a helical segment. The Cytoplasmic portion of the chain corresponds to 206 to 224 (KKTIVRSWNSGSSGGKNKL). The helical transmembrane segment at 225 to 245 (SSLGSCVSTIILFVFKLFEGF) threads the bilayer. Over 246-262 (SSGSSGSDSINQVSYSQ) the chain is Extracellular. A helical transmembrane segment spans residues 263-283 (LFVIAIITFILYSLNQFIDDV). Residues 284 to 291 (SEKELTFN) are Cytoplasmic-facing. Residues 292-312 (VLSKVSLTSSVIFGLLAALFI) traverse the membrane as a helical segment. The Extracellular portion of the chain corresponds to 313–316 (GFKD). A helical membrane pass occupies residues 317–337 (FFHPILILSFIFIINAIHILY). The Cytoplasmic portion of the chain corresponds to 338–404 (SKSNDIQPMT…QIVDKPTSRR (67 aa)). A helical membrane pass occupies residues 405-425 (IFTFLVINLMFMFVEMAYGIW). Residues 426 to 434 (TNSLGLITD) lie on the Extracellular side of the membrane. The helical transmembrane segment at 435–455 (ACHMFFDATALFIALVAEVIS) threads the bilayer. Residues 456-469 (QWKQNDKYSYGYGR) lie on the Cytoplasmic side of the membrane. Residues 470–490 (FQVLSGFVNGIFLIFIAVTIL) form a helical membrane-spanning segment. Topologically, residues 491 to 507 (MESVERLLEPPEINTDK) are extracellular. The chain crosses the membrane as a helical span at residues 508 to 528 (LLLVSVLGFIINLIGIFSFHG). The Cytoplasmic segment spans residues 529 to 592 (DHGHSHGGGG…GVFLHLLADT (64 aa)). The interval 532 to 566 (HSHGGGGGHSHGGGEKKEKHHGHSHGGHGDHQQVT) is disordered. A helical membrane pass occupies residues 593–613 (LGSVGVIVSSLIIQIWGYTLA). A topological domain (extracellular) is located at residue Asp614. Residues 615–635 (PICSLLISILIFLSVLPLIAN) traverse the membrane as a helical segment. Topologically, residues 636–770 (TAKTLLQCTP…SSSSHHHRHN (135 aa)) are cytoplasmic. Residues 751–770 (DIHHNHSSSSSSSSHHHRHN) form a disordered region.

The protein belongs to the cation diffusion facilitator (CDF) transporter (TC 2.A.4) family. SLC30A subfamily.

The protein localises to the membrane. Functionally, may be involved in zinc transport from the cytoplasm to either intracellular organelles or extracellular spaces. This is Probable zinc transporter protein DDB_G0291141 from Dictyostelium discoideum (Social amoeba).